The sequence spans 404 residues: MSCTRGWRLILLGLLCVGLLGTRGQDESRKVSVQYNPGSSDTSVNVVHVRAVGDGNTIHYVWSTLGTPTVLLIYTHSETSQLQVNWTKLLSPAPQGALRVEPEESVSYATALLFTRIFEYQDVNNTANFSGTDEKYFYPPYNLSEFLWENANATVNATSLSANLTGSNTTDPSGSFHNGSVSFRISAYNTSGRDSSPPRLRHTANCTKLEFLVSGVRPRGNNSRFALEMVTIEKEGRRKMKSVLSIDDEYTPTIFEMMQLVAVAPNSSHARGFLQWKSVAYGSPSGSRADLLPCQLYPLQPLNATFTATSIAHAYFGDDLADAYNLEAFNISFGIADGDFYDKHEFLSWSALIGYGDPPRDSFSILVICIMAVALGTPLLLLIIGTVLVTAVRHKVYPNYQPIN.

An N-terminal signal peptide occupies residues 1–24; sequence MSCTRGWRLILLGLLCVGLLGTRG. The Lumenal portion of the chain corresponds to 25–364; sequence QDESRKVSVQ…YGDPPRDSFS (340 aa). N-linked (GlcNAc...) asparagine glycosylation is found at Asn85, Asn124, Asn128, Asn142, Asn152, Asn156, Asn163, Asn168, Asn178, Asn189, Asn205, Asn221, Asn266, Asn303, and Asn330. A helical membrane pass occupies residues 365–385; the sequence is ILVICIMAVALGTPLLLLIIG. The Cytoplasmic portion of the chain corresponds to 386–404; that stretch reads TVLVTAVRHKVYPNYQPIN. The short motif at 400 to 404 is the Lysosomal targeting motif element; it reads YQPIN.

Belongs to the GLMP family. Interacts (via lumenal domain) with lysosomal protein MFSD1; the interaction starts while both proteins are still in the endoplasmic reticulum and is required for stabilization of MFSD1 in lysosomes but has no direct effect on its targeting to lysosomes or transporter activity.

It localises to the lysosome membrane. Required to protect lysosomal transporter MFSD1 from lysosomal proteolysis and for MFSD1 lysosomal localization. The protein is Glycosylated lysosomal membrane protein B (glmp-b) of Xenopus laevis (African clawed frog).